The primary structure comprises 114 residues: Iron-sulfur cluster insertion protein ErpA (114 aa).

Cysteine 42, cysteine 106, and cysteine 108 together coordinate iron-sulfur cluster.

Belongs to the HesB/IscA family. In terms of assembly, homodimer. Iron-sulfur cluster serves as cofactor.

Its function is as follows. Required for insertion of 4Fe-4S clusters for at least IspG. The sequence is that of Iron-sulfur cluster insertion protein ErpA from Yersinia pseudotuberculosis serotype O:1b (strain IP 31758).